Consider the following 347-residue polypeptide: GMP reductase (347 aa).

108–131 serves as a coordination point for NADP(+); sequence ADFEKTKQILDLNPALNFVCIDVA. Positions 181 and 183 each coordinate K(+). The Thioimidate intermediate role is filled by Cys186. NADP(+) is bound at residue 216–239; the sequence is IVSDGGCTTPGDVAKAFGGGADFV.

The protein belongs to the IMPDH/GMPR family. GuaC type 1 subfamily. Homotetramer.

The enzyme catalyses IMP + NH4(+) + NADP(+) = GMP + NADPH + 2 H(+). Functionally, catalyzes the irreversible NADPH-dependent deamination of GMP to IMP. It functions in the conversion of nucleobase, nucleoside and nucleotide derivatives of G to A nucleotides, and in maintaining the intracellular balance of A and G nucleotides. In Shigella flexneri serotype 5b (strain 8401), this protein is GMP reductase.